A 377-amino-acid polypeptide reads, in one-letter code: Glutamate 5-kinase (377 aa).

ATP is bound at residue Lys22. Substrate is bound by residues Ser62, Asp149, and Asn161. Residues 181 to 182 (TD) and 223 to 229 (TGGMVTK) contribute to the ATP site. The PUA domain maps to 285–363 (RGAIVVDAGA…AQLKRFLGPQ (79 aa)).

This sequence belongs to the glutamate 5-kinase family.

The protein resides in the cytoplasm. It carries out the reaction L-glutamate + ATP = L-glutamyl 5-phosphate + ADP. It participates in amino-acid biosynthesis; L-proline biosynthesis; L-glutamate 5-semialdehyde from L-glutamate: step 1/2. Functionally, catalyzes the transfer of a phosphate group to glutamate to form L-glutamate 5-phosphate. The sequence is that of Glutamate 5-kinase from Bifidobacterium longum subsp. infantis (strain ATCC 15697 / DSM 20088 / JCM 1222 / NCTC 11817 / S12).